Reading from the N-terminus, the 600-residue chain is ATP-dependent lipid A-core flippase (600 aa).

The next 4 helical transmembrane spans lie at valine 26–leucine 46, leucine 82–leucine 102, valine 167–isoleucine 187, and proline 266–leucine 286. An ABC transmembrane type-1 domain is found at leucine 30–lysine 321. Residues leucine 353–methionine 589 form the ABC transporter domain. Glycine 387–serine 394 is a binding site for ATP.

This sequence belongs to the ABC transporter superfamily. Lipid exporter (TC 3.A.1.106) family. As to quaternary structure, homodimer.

The protein resides in the cell inner membrane. It catalyses the reaction ATP + H2O + lipid A-core oligosaccharideSide 1 = ADP + phosphate + lipid A-core oligosaccharideSide 2.. Its function is as follows. Involved in lipopolysaccharide (LPS) biosynthesis. Translocates lipid A-core from the inner to the outer leaflet of the inner membrane. Transmembrane domains (TMD) form a pore in the inner membrane and the ATP-binding domain (NBD) is responsible for energy generation. The sequence is that of ATP-dependent lipid A-core flippase from Pseudomonas syringae pv. syringae (strain B728a).